Here is a 394-residue protein sequence, read N- to C-terminus: Venom metalloproteinase antarease TserMP_A (394 aa).

Positions 1–16 are cleaved as a signal peptide; that stretch reads MISYLASIFLLATVSA. A propeptide spanning residues 17–157 is cleaved from the precursor; the sequence is VPSGRVEVVF…NAENVSRMAR (141 aa). The Peptidase M12B domain maps to 162-391; the sequence is IVVEYYIVTD…PTASCIFQQC (230 aa). Cysteines 295 and 386 form a disulfide. Residue histidine 319 participates in Zn(2+) binding. Residue glutamate 320 is part of the active site. Residues histidine 323 and histidine 329 each contribute to the Zn(2+) site.

Zn(2+) serves as cofactor. Contains 4 disulfide bonds. In terms of tissue distribution, expressed by the venom gland.

It is found in the secreted. With respect to regulation, inhibited by EDTA. Its function is as follows. Acts as a metalloprotease. Penetrates intact tissue and specifically cleaves the vesicle-associated membrane protein 2 (VAMP2) (part of the SNARE complex) involved in pancreatic secretion, thus disrupting the normal vesicular traffic. In Tityus serrulatus (Brazilian scorpion), this protein is Venom metalloproteinase antarease TserMP_A.